Here is a 167-residue protein sequence, read N- to C-terminus: NAD(P)H-quinone oxidoreductase subunit I, chloroplastic (167 aa).

2 consecutive 4Fe-4S ferredoxin-type domains span residues 55 to 84 and 95 to 124; these read GRIH…VDWK and LNYS…MTEE. [4Fe-4S] cluster contacts are provided by Cys-64, Cys-67, Cys-70, Cys-74, Cys-104, Cys-107, Cys-110, and Cys-114.

The protein belongs to the complex I 23 kDa subunit family. NDH is composed of at least 16 different subunits, 5 of which are encoded in the nucleus. It depends on [4Fe-4S] cluster as a cofactor.

It localises to the plastid. The protein localises to the chloroplast thylakoid membrane. The enzyme catalyses a plastoquinone + NADH + (n+1) H(+)(in) = a plastoquinol + NAD(+) + n H(+)(out). It catalyses the reaction a plastoquinone + NADPH + (n+1) H(+)(in) = a plastoquinol + NADP(+) + n H(+)(out). Functionally, NDH shuttles electrons from NAD(P)H:plastoquinone, via FMN and iron-sulfur (Fe-S) centers, to quinones in the photosynthetic chain and possibly in a chloroplast respiratory chain. The immediate electron acceptor for the enzyme in this species is believed to be plastoquinone. Couples the redox reaction to proton translocation, and thus conserves the redox energy in a proton gradient. The sequence is that of NAD(P)H-quinone oxidoreductase subunit I, chloroplastic from Vitis vinifera (Grape).